Consider the following 196-residue polypeptide: Holliday junction branch migration complex subunit RuvA (196 aa).

Positions 1–63 (MINKIYGKVI…ENELKLFGFL (63 aa)) are domain I. The interval 64–139 (NSDERETFKS…KLLINNELES (76 aa)) is domain II. Serine 139 is a region of interest (flexible linker). Residues 139 to 196 (SSLFRFKELEESIVSMGFDRKIVNSKLKEAFNLVEFSNLKDSEKEQFLFKEVLKRMSN) are domain III.

Belongs to the RuvA family. Homotetramer. Forms an RuvA(8)-RuvB(12)-Holliday junction (HJ) complex. HJ DNA is sandwiched between 2 RuvA tetramers; dsDNA enters through RuvA and exits via RuvB. An RuvB hexamer assembles on each DNA strand where it exits the tetramer. Each RuvB hexamer is contacted by two RuvA subunits (via domain III) on 2 adjacent RuvB subunits; this complex drives branch migration. In the full resolvosome a probable DNA-RuvA(4)-RuvB(12)-RuvC(2) complex forms which resolves the HJ.

It localises to the cytoplasm. Functionally, the RuvA-RuvB-RuvC complex processes Holliday junction (HJ) DNA during genetic recombination and DNA repair, while the RuvA-RuvB complex plays an important role in the rescue of blocked DNA replication forks via replication fork reversal (RFR). RuvA specifically binds to HJ cruciform DNA, conferring on it an open structure. The RuvB hexamer acts as an ATP-dependent pump, pulling dsDNA into and through the RuvAB complex. HJ branch migration allows RuvC to scan DNA until it finds its consensus sequence, where it cleaves and resolves the cruciform DNA. This is Holliday junction branch migration complex subunit RuvA from Borreliella afzelii (strain PKo) (Borrelia afzelii).